The following is a 186-amino-acid chain: Cytochrome c oxidase polypeptide 5, mitochondrial (186 aa).

Residues 1–20 (MYLSKIICKKVPMKLLCTRN) constitute a mitochondrion transit peptide. Topologically, residues 21 to 107 (AATVSAAATN…GPRAFSHISQ (87 aa)) are mitochondrial matrix. The helical transmembrane segment at 108 to 128 (KTVFWGTVAGLTIGVVLFGLI) threads the bilayer. Residues 129–186 (RTQAAPSPRTMTREWQEKSNEYMKENKINPISGEASEGFKGRGQISGGIFSPSEKDKK) are Mitochondrial intermembrane-facing. The segment at 149–186 (EYMKENKINPISGEASEGFKGRGQISGGIFSPSEKDKK) is disordered.

The protein belongs to the cytochrome c oxidase IV family. In terms of assembly, component of the cytochrome c oxidase (complex IV, CIV), a multisubunit enzyme composed of a catalytic core of 3 subunits and seevral supernumerary subunits. The complex exists as a monomer or a dimer and forms supercomplexes (SCs) in the inner mitochondrial membrane with ubiquinol-cytochrome c oxidoreductase (cytochrome b-c1 complex, complex III, CIII).

The protein localises to the mitochondrion inner membrane. It functions in the pathway energy metabolism; oxidative phosphorylation. In terms of biological role, component of the cytochrome c oxidase, the last enzyme in the mitochondrial electron transport chain which drives oxidative phosphorylation. The respiratory chain contains 3 multisubunit complexes succinate dehydrogenase (complex II, CII), ubiquinol-cytochrome c oxidoreductase (cytochrome b-c1 complex, complex III, CIII) and cytochrome c oxidase (complex IV, CIV), that cooperate to transfer electrons derived from NADH and succinate to molecular oxygen, creating an electrochemical gradient over the inner membrane that drives transmembrane transport and the ATP synthase. Cytochrome c oxidase is the component of the respiratory chain that catalyzes the reduction of oxygen to water. Electrons originating from reduced cytochrome c in the intermembrane space (IMS) are transferred via the dinuclear copper A center (CU(A)) of subunit 2 and heme A of subunit 1 to the active site in subunit 1, a binuclear center (BNC) formed by heme A3 and copper B (CU(B)). The BNC reduces molecular oxygen to 2 water molecules using 4 electrons from cytochrome c in the IMS and 4 protons from the mitochondrial matrix. This chain is Cytochrome c oxidase polypeptide 5, mitochondrial (cox5), found in Schizosaccharomyces pombe (strain 972 / ATCC 24843) (Fission yeast).